Consider the following 431-residue polypeptide: GTPase Obg (431 aa).

Residues Met-1–Leu-158 enclose the Obg domain. Positions Ala-159 to Asp-335 constitute an OBG-type G domain. GTP is bound by residues Gly-165 to Ser-172, Phe-190 to Val-194, Asp-212 to Gly-215, Thr-282 to Asp-285, and Ser-316 to Ile-318. Mg(2+)-binding residues include Ser-172 and Thr-192. Residues Tyr-353–Asp-431 enclose the OCT domain.

This sequence belongs to the TRAFAC class OBG-HflX-like GTPase superfamily. OBG GTPase family. As to quaternary structure, monomer. It depends on Mg(2+) as a cofactor.

Its subcellular location is the cytoplasm. In terms of biological role, an essential GTPase which binds GTP, GDP and possibly (p)ppGpp with moderate affinity, with high nucleotide exchange rates and a fairly low GTP hydrolysis rate. Plays a role in control of the cell cycle, stress response, ribosome biogenesis and in those bacteria that undergo differentiation, in morphogenesis control. The chain is GTPase Obg from Lactiplantibacillus plantarum (strain ATCC BAA-793 / NCIMB 8826 / WCFS1) (Lactobacillus plantarum).